A 329-amino-acid chain; its full sequence is 31 kDa immunogenic protein (329 aa).

The N-terminal stretch at 1–28 is a signal peptide; that stretch reads MKFGSKIRRLAVAAVAGAIALGASFAVA.

This is 31 kDa immunogenic protein (bcsP31) from Brucella abortus biovar 1 (strain 9-941).